Consider the following 506-residue polypeptide: Nondiscriminating glutamyl-tRNA synthetase EARS2, mitochondrial (506 aa).

The N-terminal 41 residues, methionine 1 to phenylalanine 41, are a transit peptide targeting the mitochondrion. Arginine 40–alanine 42 serves as a coordination point for L-glutamate. The 'HIGH' region motif lies at proline 45–glycine 53. An ATP-binding site is contributed by histidine 50. Residues glutamate 76, tyrosine 228–cysteine 232, and arginine 246 contribute to the L-glutamate site. Residue glutamate 249 coordinates ATP. Lysine 256 carries the N6-succinyllysine modification. Lysine 284–arginine 288 serves as a coordination point for ATP. Residues lysine 284–arginine 288 carry the 'KMSKS' region motif. An N6-acetyllysine modification is found at lysine 486.

Belongs to the class-I aminoacyl-tRNA synthetase family. Glutamate--tRNA ligase type 1 subfamily.

The protein localises to the mitochondrion matrix. It catalyses the reaction tRNA(Glx) + L-glutamate + ATP = L-glutamyl-tRNA(Glx) + AMP + diphosphate. The enzyme catalyses tRNA(Glu) + L-glutamate + ATP = L-glutamyl-tRNA(Glu) + AMP + diphosphate. It carries out the reaction tRNA(Gln) + L-glutamate + ATP = L-glutamyl-tRNA(Gln) + AMP + diphosphate. Functionally, non-discriminating glutamyl-tRNA synthetase that catalyzes aminoacylation of both mitochondrial tRNA(Glu) and tRNA(Gln) and participates in RNA aminoacylation for mitochondrial protein translation. Attachs glutamate to tRNA(Glu) or tRNA(Gln) in a two-step reaction: glutamate is first activated by ATP to form Glu-AMP and then transferred to the acceptor end of tRNA(Glu) or tRNA(Gln). In vitro, cytoplasmic tRNA(Gln) is slightly glutamylated, but with low activity. This is Nondiscriminating glutamyl-tRNA synthetase EARS2, mitochondrial from Macaca fascicularis (Crab-eating macaque).